The chain runs to 149 residues: Glycophorin-A (149 aa).

A signal peptide spans 1–19 (MYGKIIFVLLLSAIVSISA). The Extracellular portion of the chain corresponds to 20–90 (SSTTEVAMHT…QLVHRFSEPE (71 aa)). The O-linked (GalNAc...) serine glycan is linked to S21. Residues T22, T23, and T29 are each glycosylated (O-linked (GalNAc...) threonine). The O-linked (GalNAc...) serine glycan is linked to S30. T31 carries O-linked (GalNAc...) threonine glycosylation. The O-linked (GalNAc...) serine glycan is linked to S32. T35 carries O-linked (GalNAc...) threonine glycosylation. S37 and S40 each carry an O-linked (GalNAc...) serine glycan. T43 carries an O-linked (GalNAc...) threonine glycan. S44 is a glycosylation site (O-linked (GalNAc...) serine). O-linked (GalNAc...) threonine glycosylation is found at T51 and T55. O-linked (GalNAc...) serine glycosylation occurs at S62. O-linked (GalNAc...) threonine glycosylation is present at T68. A helical membrane pass occupies residues 91-113 (ITLIIFGVMAGVIGTILLIYYSI). Topologically, residues 114 to 149 (RRLIKKSPSDVKPLPSPDTDVPLSSVEIENPETSDQ) are cytoplasmic. The interval 122–149 (SDVKPLPSPDTDVPLSSVEIENPETSDQ) is disordered. Phosphoserine occurs at positions 137 and 147.

This sequence belongs to the glycophorin-A family. As to quaternary structure, homodimer. Component of the ankyrin-1 complex in the erythrocyte, composed of ANK1, RHCE, RHAG, SLC4A1, EPB42, GYPA, GYPB and AQP1. Interacts with SLC4A1; a GYPA monomer is bound at each end of the SLC4A1 dimer forming a heterotetramer.

The protein resides in the cell membrane. Its function is as follows. Component of the ankyrin-1 complex, a multiprotein complex involved in the stability and shape of the erythrocyte membrane. Glycophorin A is the major intrinsic membrane protein of the erythrocyte. The N-terminal glycosylated segment, which lies outside the erythrocyte membrane, has MN blood group receptors. Appears to be important for the function of SLC4A1 and is required for high activity of SLC4A1. May be involved in translocation of SLC4A1 to the plasma membrane. The protein is Glycophorin-A of Pan troglodytes (Chimpanzee).